A 428-amino-acid chain; its full sequence is Trigger factor (428 aa).

A PPIase FKBP-type domain is found at 166 to 250; it reads GDIVTFDFKG…IKNIKEKILP (85 aa).

This sequence belongs to the FKBP-type PPIase family. Tig subfamily.

The protein localises to the cytoplasm. The enzyme catalyses [protein]-peptidylproline (omega=180) = [protein]-peptidylproline (omega=0). In terms of biological role, involved in protein export. Acts as a chaperone by maintaining the newly synthesized protein in an open conformation. Functions as a peptidyl-prolyl cis-trans isomerase. This Mycoplasma capricolum subsp. capricolum (strain California kid / ATCC 27343 / NCTC 10154) protein is Trigger factor.